We begin with the raw amino-acid sequence, 612 residues long: Glutamine--fructose-6-phosphate aminotransferase [isomerizing] (612 aa).

Cysteine 2 acts as the Nucleophile; for GATase activity in catalysis. Positions cysteine 2–aspartate 219 constitute a Glutamine amidotransferase type-2 domain. SIS domains are found at residues alanine 287–serine 427 and isoleucine 460–proline 602. Lysine 607 serves as the catalytic For Fru-6P isomerization activity.

Homodimer.

It is found in the cytoplasm. It carries out the reaction D-fructose 6-phosphate + L-glutamine = D-glucosamine 6-phosphate + L-glutamate. In terms of biological role, catalyzes the first step in hexosamine metabolism, converting fructose-6P into glucosamine-6P using glutamine as a nitrogen source. This is Glutamine--fructose-6-phosphate aminotransferase [isomerizing] from Francisella tularensis subsp. tularensis (strain SCHU S4 / Schu 4).